A 306-amino-acid polypeptide reads, in one-letter code: Mycothiol acetyltransferase (306 aa).

N-acetyltransferase domains follow at residues 17–163 and 166–306; these read VARV…RPMP and LALS…YRRA. E48 contributes to the 1D-myo-inositol 2-(L-cysteinylamino)-2-deoxy-alpha-D-glucopyranoside binding site. Residue 89–91 coordinates acetyl-CoA; sequence IVV. 1D-myo-inositol 2-(L-cysteinylamino)-2-deoxy-alpha-D-glucopyranoside is bound by residues E192, K232, and E239. Residues 243-245 and 250-256 contribute to the acetyl-CoA site; these read LGV and AARGLGS. Y277 is a 1D-myo-inositol 2-(L-cysteinylamino)-2-deoxy-alpha-D-glucopyranoside binding site.

It belongs to the acetyltransferase family. MshD subfamily. In terms of assembly, monomer.

It carries out the reaction 1D-myo-inositol 2-(L-cysteinylamino)-2-deoxy-alpha-D-glucopyranoside + acetyl-CoA = mycothiol + CoA + H(+). Its function is as follows. Catalyzes the transfer of acetyl from acetyl-CoA to desacetylmycothiol (Cys-GlcN-Ins) to form mycothiol. The polypeptide is Mycothiol acetyltransferase (Clavibacter michiganensis subsp. michiganensis (strain NCPPB 382)).